Consider the following 269-residue polypeptide: Signal recognition particle receptor subunit beta (269 aa).

Residues 35 to 55 (LLSVAVALLAVLLTLVFWKFI) form a helical membrane-spanning segment. GTP contacts are provided by residues 69–77 (GLCDSGKTL) and 90–93 (TQTS). Ser-110 is modified (phosphoserine). Residues Gly-118 and 178 to 181 (NKQD) contribute to the GTP site. Residue Thr-212 is modified to Phosphothreonine. Ala-246 provides a ligand contact to GTP.

This sequence belongs to the SRP receptor beta subunit family. As to quaternary structure, heterodimer with SRPRA.

The protein localises to the endoplasmic reticulum membrane. Component of the SRP (signal recognition particle) receptor. Ensures, in conjunction with the signal recognition particle, the correct targeting of the nascent secretory proteins to the endoplasmic reticulum membrane system. May mediate the membrane association of SR. The sequence is that of Signal recognition particle receptor subunit beta (Srprb) from Mus musculus (Mouse).